We begin with the raw amino-acid sequence, 510 residues long: ATP synthase subunit alpha (510 aa).

169–176 (GDRQTGKT) is an ATP binding site.

Belongs to the ATPase alpha/beta chains family. As to quaternary structure, F-type ATPases have 2 components, CF(1) - the catalytic core - and CF(0) - the membrane proton channel. CF(1) has five subunits: alpha(3), beta(3), gamma(1), delta(1), epsilon(1). CF(0) has three main subunits: a(1), b(2) and c(9-12). The alpha and beta chains form an alternating ring which encloses part of the gamma chain. CF(1) is attached to CF(0) by a central stalk formed by the gamma and epsilon chains, while a peripheral stalk is formed by the delta and b chains.

The protein resides in the cell inner membrane. The enzyme catalyses ATP + H2O + 4 H(+)(in) = ADP + phosphate + 5 H(+)(out). Produces ATP from ADP in the presence of a proton gradient across the membrane. The alpha chain is a regulatory subunit. This is ATP synthase subunit alpha from Rickettsia peacockii (strain Rustic).